The chain runs to 328 residues: MIEKIWSGESPLWRLLLPLSWLYGLVSGAIRLCYKLKLKRAWRAPVPVVVVGNLTAGGNGKTPVVVWLVEQLQQRGIRVGVVSRGYGGKAESYPLLLSADTTTAQAGDEPVLIYQRTDAPVAVSPVRSDAVKAILAQHPDVQIIVTDDGLQHYRLARDVEIVVIDGVRRFGNGWWLPAGPMRERAGRLKSVDAVIVNGGVPRSGEIPMHLLPGQAVNLRTGTRCDVAQLEHVVAMAGIGHPPRFFATLKMCGVQPEKCVPLADHQSLNHADVSALVSTGQTLVMTEKDAVKCRAFAEENWWYLPVDAQLSGDEPAKLLAQLTSLASGN.

55-62 (TAGGNGKT) contacts ATP.

The protein belongs to the LpxK family.

It catalyses the reaction a lipid A disaccharide + ATP = a lipid IVA + ADP + H(+). It functions in the pathway glycolipid biosynthesis; lipid IV(A) biosynthesis; lipid IV(A) from (3R)-3-hydroxytetradecanoyl-[acyl-carrier-protein] and UDP-N-acetyl-alpha-D-glucosamine: step 6/6. Functionally, transfers the gamma-phosphate of ATP to the 4'-position of a tetraacyldisaccharide 1-phosphate intermediate (termed DS-1-P) to form tetraacyldisaccharide 1,4'-bis-phosphate (lipid IVA). In Escherichia coli O157:H7, this protein is Tetraacyldisaccharide 4'-kinase.